Consider the following 481-residue polypeptide: UDP-N-acetylmuramoyl-L-alanyl-D-glutamate--L-lysine ligase (481 aa).

Serine 42 contributes to the UDP-N-acetyl-alpha-D-muramoyl-L-alanyl-D-glutamate binding site. Position 118 to 124 (118 to 124) interacts with ATP; the sequence is GTKGKTT. Residues asparagine 158, 160–161, serine 187, and arginine 195 each bind UDP-N-acetyl-alpha-D-muramoyl-L-alanyl-D-glutamate; that span reads TT. Position 229 is an N6-carboxylysine (lysine 229). The L-lysine recognition motif motif lies at 404–407; that stretch reads DDPN.

It belongs to the MurCDEF family. MurE subfamily. In terms of processing, carboxylation is probably crucial for Mg(2+) binding and, consequently, for the gamma-phosphate positioning of ATP.

The protein resides in the cytoplasm. The catalysed reaction is UDP-N-acetyl-alpha-D-muramoyl-L-alanyl-D-glutamate + L-lysine + ATP = UDP-N-acetyl-alpha-D-muramoyl-L-alanyl-gamma-D-glutamyl-L-lysine + ADP + phosphate + H(+). It participates in cell wall biogenesis; peptidoglycan biosynthesis. Functionally, catalyzes the addition of L-lysine to the nucleotide precursor UDP-N-acetylmuramoyl-L-alanyl-D-glutamate (UMAG) in the biosynthesis of bacterial cell-wall peptidoglycan. In Streptococcus thermophilus (strain ATCC BAA-491 / LMD-9), this protein is UDP-N-acetylmuramoyl-L-alanyl-D-glutamate--L-lysine ligase.